Here is an 873-residue protein sequence, read N- to C-terminus: Bifunctional heparan sulfate N-deacetylase/N-sulfotransferase 3 (873 aa).

Residues 1–13 (MSFIMKPHRHFQR) lie on the Cytoplasmic side of the membrane. Residues 14-34 (TLILLATFCMVSIIISAYYLY) form a helical; Signal-anchor for type II membrane protein membrane-spanning segment. The Lumenal segment spans residues 35–873 (SGYKQESEVS…WLRQELQKVR (839 aa)). The heparan sulfate N-deacetylase 3 stretch occupies residues 36 to 589 (GYKQESEVSG…KRHRDIWSKE (554 aa)). 4 N-linked (GlcNAc...) asparagine glycosylation sites follow: Asn-146, Asn-226, Asn-342, and Asn-392. A heparan sulfate N-sulfotransferase 3 region spans residues 590–873 (KTCDRLPKFL…WLRQELQKVR (284 aa)). Residue Lys-605 is the For sulfotransferase activity of the active site. Residue 605 to 609 (KTGTT) coordinates 3'-phosphoadenylyl sulfate. Asn-658 carries N-linked (GlcNAc...) asparagine glycosylation. Residue Ser-703 participates in 3'-phosphoadenylyl sulfate binding. Asn-794 carries N-linked (GlcNAc...) asparagine glycosylation. Cys-809 and Cys-819 are oxidised to a cystine. 824–828 (KGRKY) is a binding site for 3'-phosphoadenylyl sulfate.

This sequence belongs to the sulfotransferase 1 family. NDST subfamily. In terms of assembly, monomer. Strongly expressed strongly in brain. Expressed at high level at embryonic day 11 compared to other stages of development. Weakly expressed in adult heart, kidney, muscle, endothelial cells and testis but not in other tissues.

It localises to the golgi apparatus membrane. It carries out the reaction alpha-D-glucosaminyl-[heparan sulfate](n) + 3'-phosphoadenylyl sulfate = N-sulfo-alpha-D-glucosaminyl-[heparan sulfate](n) + adenosine 3',5'-bisphosphate + 2 H(+). It functions in the pathway glycan metabolism; heparan sulfate biosynthesis. The protein operates within glycan metabolism; heparin biosynthesis. In terms of biological role, essential bifunctional enzyme that catalyzes both the N-deacetylation and the N-sulfation of glucosamine (GlcNAc) of the glycosaminoglycan in heparan sulfate. Modifies the GlcNAc-GlcA disaccharide repeating sugar backbone to make N-sulfated heparosan, a prerequisite substrate for later modifications in heparin biosynthesis. Has high deacetylase activity but low sulfotransferase activity. The polypeptide is Bifunctional heparan sulfate N-deacetylase/N-sulfotransferase 3 (Ndst3) (Mus musculus (Mouse)).